The primary structure comprises 132 residues: Small ribosomal subunit protein uS8 (132 aa).

This sequence belongs to the universal ribosomal protein uS8 family. Part of the 30S ribosomal subunit. Contacts proteins S5 and S12.

One of the primary rRNA binding proteins, it binds directly to 16S rRNA central domain where it helps coordinate assembly of the platform of the 30S subunit. The chain is Small ribosomal subunit protein uS8 from Rickettsia rickettsii (strain Sheila Smith).